Here is a 296-residue protein sequence, read N- to C-terminus: 4-hydroxybenzoate octaprenyltransferase (296 aa).

8 helical membrane passes run 29-49, 55-75, 102-122, 146-166, 169-189, 219-239, 241-261, and 275-295; these read IGIY…ADGV, LLIF…INDF, AWIT…LTNA, YYPQ…AFTA, GELP…TVAY, LIIG…GSRF, LGLY…WEAW, and FLHN…DYAL.

This sequence belongs to the UbiA prenyltransferase family. Requires Mg(2+) as cofactor.

Its subcellular location is the cell inner membrane. It carries out the reaction all-trans-octaprenyl diphosphate + 4-hydroxybenzoate = 4-hydroxy-3-(all-trans-octaprenyl)benzoate + diphosphate. The protein operates within cofactor biosynthesis; ubiquinone biosynthesis. Catalyzes the prenylation of para-hydroxybenzoate (PHB) with an all-trans polyprenyl group. Mediates the second step in the final reaction sequence of ubiquinone-8 (UQ-8) biosynthesis, which is the condensation of the polyisoprenoid side chain with PHB, generating the first membrane-bound Q intermediate 3-octaprenyl-4-hydroxybenzoate. The protein is 4-hydroxybenzoate octaprenyltransferase of Pseudomonas aeruginosa (strain UCBPP-PA14).